Here is a 483-residue protein sequence, read N- to C-terminus: Acetyltransferase AOL_s00215g273 (483 aa).

A run of 8 helical transmembrane segments spans residues A9–V29, I33–L53, V141–C161, I191–V211, F292–G312, V334–W354, W372–I392, and L453–F473.

The protein belongs to the wax synthase family.

It localises to the membrane. Its pathway is secondary metabolite biosynthesis; terpenoid biosynthesis. Functionally, acetyltransferase; part of the gene cluster that mediates the biosynthesis of sesquiterpenyl epoxy-cyclohexenoids (SECs) such as anthrobotrisins and arthrosporols, metabolites that possess a novel hybrid carbon skeleton consisting of a polyketide-derived epoxycyclohexenol combined with a terpenoid-derived monocyclic sesquiterpenol substructure (PKS-PTS hybrid). The SEC pathway plays an important role for fungal soil colonization via decreasing fungal nematode-capturing ability. The role of the acetyltransferase in SEC biosynthesis has still to be determined. The pathway begins with the biosynthesis of 6-methylsalicylic acid (6-MSA), the first precursor of the polyketide-derived epoxycyclohexenol in arthrosporols, by the polyketide synthase (PKS) AOL_s00215g283 via condensation of 1 acetate and 3 malonate units. The 6-methylsalicylic acid decarboxylase AOL_s00215g281 then catalyzes the decarboxylation of 6-methylsalicylic acid to yield m-cresol. The cytochrome P450 monooxygenase AOL_s00215g282 further oxidizes m-cresol to yield toluquinol. With the assistance of the oxidoreductase AOL_s00215g277, the polyprenyl transferase AOL_s00215g276 catalyzes the farnesylation of toluquinol to produce farnesyl hydroquinone, the hybrid precursor for biosynthesis of SECs. Farnesyl hydroquinone undergoes epoxidation and then subsequent dehydrogenation to form farnesyl epoxy-quinone, the first and simplest SEC. The cytochrome P450 monooxygenase AOL_s00215g278 and the FAD-dependent monooxygenase AOL_s00215g279 might be involved in the oxygenation of the phenol moiety, most likely in the epoxy formation. The cytochrome P450 monooxygenases AOL_s00215g274 and AOL_s00215g280 are involved in specific regional ketone reductions at respectively C-4 and C-1 of farnesyl epoxy-quinone PubMed:33823587. This chain is Acetyltransferase AOL_s00215g273, found in Arthrobotrys oligospora (strain ATCC 24927 / CBS 115.81 / DSM 1491) (Nematode-trapping fungus).